A 190-amino-acid polypeptide reads, in one-letter code: MTEIVKVREQLQMSLSDFQEQASLQSGQIFVVGCSTSEVLGERIGTSGTMEVAEAIFSELKQFQEQTGIELAFQCCEHLNRALVVEREVAIKYQFEIVTVTPVRSAGGALGTYAYHNLKDPVVVEFIKADAGMDIGDTFIGMHLKHVAVPVRTNVKEIGSAHVTMAKTRGKLIGGARAVYAAVEETTTCR.

This sequence belongs to the UPF0340 family.

This chain is UPF0340 protein BC_5317, found in Bacillus cereus (strain ATCC 14579 / DSM 31 / CCUG 7414 / JCM 2152 / NBRC 15305 / NCIMB 9373 / NCTC 2599 / NRRL B-3711).